Consider the following 196-residue polypeptide: Dephospho-CoA kinase (196 aa).

Residues Ala-6–Leu-196 form the DPCK domain. Gly-14–Thr-19 is a binding site for ATP.

The protein belongs to the CoaE family.

It is found in the cytoplasm. The catalysed reaction is 3'-dephospho-CoA + ATP = ADP + CoA + H(+). The protein operates within cofactor biosynthesis; coenzyme A biosynthesis; CoA from (R)-pantothenate: step 5/5. In terms of biological role, catalyzes the phosphorylation of the 3'-hydroxyl group of dephosphocoenzyme A to form coenzyme A. The protein is Dephospho-CoA kinase of Helicobacter pylori (strain J99 / ATCC 700824) (Campylobacter pylori J99).